We begin with the raw amino-acid sequence, 319 residues long: Methionyl-tRNA formyltransferase (319 aa).

(6S)-5,6,7,8-tetrahydrofolate is bound at residue 112–115 (SLLP).

The protein belongs to the Fmt family.

The catalysed reaction is L-methionyl-tRNA(fMet) + (6R)-10-formyltetrahydrofolate = N-formyl-L-methionyl-tRNA(fMet) + (6S)-5,6,7,8-tetrahydrofolate + H(+). Its function is as follows. Attaches a formyl group to the free amino group of methionyl-tRNA(fMet). The formyl group appears to play a dual role in the initiator identity of N-formylmethionyl-tRNA by promoting its recognition by IF2 and preventing the misappropriation of this tRNA by the elongation apparatus. The sequence is that of Methionyl-tRNA formyltransferase from Pelobacter propionicus (strain DSM 2379 / NBRC 103807 / OttBd1).